Reading from the N-terminus, the 389-residue chain is 26S proteasome regulatory subunit 10B (389 aa).

The residue at position 72 (lysine 72) is an N6-acetyllysine. 174–181 (GPPGTGKT) serves as a coordination point for ATP. Position 206 is an N6-acetyllysine (lysine 206). At serine 244 the chain carries Phosphoserine.

The protein belongs to the AAA ATPase family. In terms of assembly, component of the 19S proteasome regulatory particle complex. The 26S proteasome consists of a 20S core particle (CP) and two 19S regulatory subunits (RP). The regulatory particle is made of a lid composed of 9 subunits, a base containing 6 ATPases including PSMC6 and few additional components. Interacts with PAAF1.

It is found in the cytoplasm. It localises to the nucleus. Functionally, component of the 26S proteasome, a multiprotein complex involved in the ATP-dependent degradation of ubiquitinated proteins. This complex plays a key role in the maintenance of protein homeostasis by removing misfolded or damaged proteins, which could impair cellular functions, and by removing proteins whose functions are no longer required. Therefore, the proteasome participates in numerous cellular processes, including cell cycle progression, apoptosis, or DNA damage repair. PSMC6 belongs to the heterohexameric ring of AAA (ATPases associated with diverse cellular activities) proteins that unfolds ubiquitinated target proteins that are concurrently translocated into a proteolytic chamber and degraded into peptides. The sequence is that of 26S proteasome regulatory subunit 10B (PSMC6) from Homo sapiens (Human).